The primary structure comprises 516 residues: MPSGSHWTANSSKIITWLLEQPGKEEKRKTMAKVNRARSTSPPDGGWGWMIVAGCFLVTICTRAVTRCISIFFVEFQTYFTQDYAQTAWIHSIVDCVTMLCAPLGSVVSNHLSCQVGIMLGGLLASTGLILSSFATSLKHLYLTLGVLTGLGFALCYSPAIAMVGKYFSRRKALAYGIAMSGSGIGTFILAPVVQLLIEQFSWRGALLILGGFVLNLCVCGALMRPITLKEDHTTPEQNHVCRTQKEDIKRVSPYSSLTKEWAQTCLCCCLQQEYSFLLMSDFVVLAVSVLFMAYGCSPLFVYLVPYALSVGVSHQQAAFLMSILGVIDIIGNITFGWLTDRRCLKNYQYVCYLFAVGMDGLCYLCLPMLQSLPLLVPFSCTFGYFDGAYVTLIPVVTTEIVGTTSLSSALGVVYFLHAVPYLVSPPIAGRLVDTTGSYTAAFLLCGFSMIFSSVLLGFARLIKRMRKTQLQFIAKESDPKLQLWTNGSVAYSVARELDQKHGEPVATAVPGYSLT.

The Cytoplasmic portion of the chain corresponds to 1 to 50; the sequence is MPSGSHWTANSSKIITWLLEQPGKEEKRKTMAKVNRARSTSPPDGGWGWM. The next 12 helical transmembrane spans lie at 51-73, 88-108, 116-136, 145-165, 178-198, 207-227, 283-303, 319-339, 350-370, 377-397, 410-430, and 440-460; these read IVAG…SIFF, AWIH…GSVV, VGIM…SFAT, LGVL…AMVG, IAMS…QLLI, LLIL…MRPI, FVVL…LFVY, AFLM…FGWL, YVCY…LPML, VPFS…IPVV, ALGV…PIAG, and TAAF…LGFA. Over 461–516 the chain is Cytoplasmic; that stretch reads RLIKRMRKTQLQFIAKESDPKLQLWTNGSVAYSVARELDQKHGEPVATAVPGYSLT.

This sequence belongs to the major facilitator superfamily. Monocarboxylate porter (TC 2.A.1.13) family. Interacts with isoform 2 of BSG; this interaction is required for its localization to the plasma membrane. As to expression, most highly expressed in kidney, followed by retina, lung, heart and testis. Very weakly expressed in brain and liver. Also detected in lens.

Its subcellular location is the cell membrane. It localises to the basolateral cell membrane. It catalyses the reaction creatine(in) = creatine(out). The catalysed reaction is guanidinoacetate(in) = guanidinoacetate(out). With respect to regulation, creatine uptake is inhibited by carbonyl cyanide 3-chlorophenylhydrazone (CCCP) and by valinomycin. Functionally, functions as a transporter for creatine and as well for its precursor guanidinoacetate. Transport of creatine and GAA is independent of resting membrane potential and extracellular Na(+), Cl(-), or pH. Contributes to the process of creatine biosynthesis and distribution. The sequence is that of Monocarboxylate transporter 12 from Homo sapiens (Human).